The chain runs to 483 residues: Probable pectate lyase 12 (483 aa).

The N-terminal stretch at 1–24 (MMLQRSCIVLFFSLFLLVPQMVFS) is a signal peptide. Residues Asn-27 and Asn-50 are each glycosylated (N-linked (GlcNAc...) asparagine). Ca(2+)-binding residues include Asp-220, Asp-244, and Asp-248. Arg-300 is a catalytic residue.

This sequence belongs to the polysaccharide lyase 1 family. Ca(2+) is required as a cofactor.

The catalysed reaction is Eliminative cleavage of (1-&gt;4)-alpha-D-galacturonan to give oligosaccharides with 4-deoxy-alpha-D-galact-4-enuronosyl groups at their non-reducing ends.. It functions in the pathway glycan metabolism; pectin degradation; 2-dehydro-3-deoxy-D-gluconate from pectin: step 2/5. The chain is Probable pectate lyase 12 from Arabidopsis thaliana (Mouse-ear cress).